Consider the following 995-residue polypeptide: Integrator complex subunit 8 (995 aa).

Position 18 is a phosphothreonine (Thr-18). The WFEF motif signature appears at Trp-24 to Leu-29. TPR repeat units follow at residues Cys-250–Ile-288, Ser-320–Val-356, Val-570–Phe-603, and His-833–Phe-866.

Belongs to the Integrator subunit 8 family. As to quaternary structure, component of the Integrator complex, composed of core subunits INTS1, INTS2, INTS3, INTS4, INTS5, INTS6, INTS7, INTS8, INTS9/RC74, INTS10, INTS11/CPSF3L, INTS12, INTS13, INTS14 and INTS15. The core complex associates with protein phosphatase 2A subunits PPP2CA and PPP2R1A, to form the Integrator-PP2A (INTAC) complex.

The protein resides in the nucleus. The protein localises to the chromosome. Its function is as follows. Component of the integrator complex, a multiprotein complex that terminates RNA polymerase II (Pol II) transcription in the promoter-proximal region of genes. The integrator complex provides a quality checkpoint during transcription elongation by driving premature transcription termination of transcripts that are unfavorably configured for transcriptional elongation: the complex terminates transcription by (1) catalyzing dephosphorylation of the C-terminal domain (CTD) of Pol II subunit POLR2A/RPB1 and SUPT5H/SPT5, (2) degrading the exiting nascent RNA transcript via endonuclease activity and (3) promoting the release of Pol II from bound DNA. The integrator complex is also involved in terminating the synthesis of non-coding Pol II transcripts, such as enhancer RNAs (eRNAs), small nuclear RNAs (snRNAs), telomerase RNAs and long non-coding RNAs (lncRNAs). Within the integrator complex, INTS8 is required for the recruitment of protein phosphatase 2A (PP2A) to transcription pause-release checkpoint. The protein is Integrator complex subunit 8 (Ints8) of Mus musculus (Mouse).